A 294-amino-acid polypeptide reads, in one-letter code: uncharacterized protein (294 aa).

The segment at 259–294 is disordered; it reads LNAPTPIPPPITSHAGQEEALKPQRASKGKKAKARK. Basic residues predominate over residues 283 to 294; sequence RASKGKKAKARK.

This is an uncharacterized protein from Homo sapiens (Human).